The following is a 304-amino-acid chain: ATP synthase gamma chain (304 aa).

This sequence belongs to the ATPase gamma chain family. In terms of assembly, F-type ATPases have 2 components, CF(1) - the catalytic core - and CF(0) - the membrane proton channel. CF(1) has five subunits: alpha(3), beta(3), gamma(1), delta(1), epsilon(1). CF(0) has three main subunits: a, b and c.

The protein localises to the cell membrane. Its function is as follows. Produces ATP from ADP in the presence of a proton gradient across the membrane. The gamma chain is believed to be important in regulating ATPase activity and the flow of protons through the CF(0) complex. The chain is ATP synthase gamma chain from Chloroherpeton thalassium (strain ATCC 35110 / GB-78).